We begin with the raw amino-acid sequence, 115 residues long: Holo-[acyl-carrier-protein] synthase (115 aa).

Residues D6 and E51 each coordinate Mg(2+).

This sequence belongs to the P-Pant transferase superfamily. AcpS family. The cofactor is Mg(2+).

It localises to the cytoplasm. It carries out the reaction apo-[ACP] + CoA = holo-[ACP] + adenosine 3',5'-bisphosphate + H(+). Functionally, transfers the 4'-phosphopantetheine moiety from coenzyme A to a Ser of acyl-carrier-protein. The protein is Holo-[acyl-carrier-protein] synthase of Campylobacter jejuni subsp. jejuni serotype O:23/36 (strain 81-176).